We begin with the raw amino-acid sequence, 213 residues long: MDEKGILVAISGGSCSGKTTVAEMIYQLLSKKLKVAIICQDNYYKSYKNKPLLKRKTINFDHPDAFDWKLLRSHIEDLLNGSIVNVPLYDYINYTRAKKTAKIGPIDVVILEGLMPWFDEKLSRLSKLKIFIETNGEERLIRRIERDWQRGRNIDSIIKQWREIVAPMYEIFVEKMKRNADLILPWSQRREVSTSVLDVAIEHLFHKTVEKNN.

12-19 (GGSCSGKT) provides a ligand contact to ATP.

The protein belongs to the uridine kinase family.

The protein localises to the cytoplasm. It carries out the reaction uridine + ATP = UMP + ADP + H(+). The catalysed reaction is cytidine + ATP = CMP + ADP + H(+). Its pathway is pyrimidine metabolism; CTP biosynthesis via salvage pathway; CTP from cytidine: step 1/3. It functions in the pathway pyrimidine metabolism; UMP biosynthesis via salvage pathway; UMP from uridine: step 1/1. The chain is Uridine kinase (udk) from Mycoplasma genitalium (strain ATCC 33530 / DSM 19775 / NCTC 10195 / G37) (Mycoplasmoides genitalium).